The sequence spans 635 residues: Threonine--tRNA ligase (635 aa).

Residues 1–61 form the TGS domain; sequence MTVVRLPDGT…EIDSDLVLIT (61 aa). The segment at 242–533 is catalytic; sequence DHRKLGKQLD…LIEHHAGALP (292 aa). Zn(2+)-binding residues include C333, H384, and H510.

It belongs to the class-II aminoacyl-tRNA synthetase family. As to quaternary structure, homodimer. It depends on Zn(2+) as a cofactor.

It is found in the cytoplasm. It catalyses the reaction tRNA(Thr) + L-threonine + ATP = L-threonyl-tRNA(Thr) + AMP + diphosphate + H(+). Catalyzes the attachment of threonine to tRNA(Thr) in a two-step reaction: L-threonine is first activated by ATP to form Thr-AMP and then transferred to the acceptor end of tRNA(Thr). Also edits incorrectly charged L-seryl-tRNA(Thr). This is Threonine--tRNA ligase from Nitrosomonas eutropha (strain DSM 101675 / C91 / Nm57).